A 615-amino-acid chain; its full sequence is Dehydrogenase str4 (615 aa).

FAD-binding positions include 45–46, 66–67, and 123–126; these read TA, EA, and NGSM. Histidine 552 acts as the Proton acceptor in catalysis. FAD is bound by residues alanine 585 and 596-597; that span reads PA.

The protein belongs to the GMC oxidoreductase family. In terms of assembly, homodimer. The cofactor is FAD.

The protein operates within mycotoxin biosynthesis. Dehydrogenase; part of the gene cluster that mediates the biosynthesis of strobilurin A, an antifungal polyketide that contains a key beta-methoxyacrylate toxophore that targets the complex III of the mitochondrial electron transport chain. Strobilurin biosynthesis begins with construction of benzoyl CoA by step-wise elimination of ammonia from phenylalanine by the phenylalanine ammonia-lyase str11, oxygenation by str8 and retro-Claisen reaction to form benzoic acid, which is activated to its CoA thiolester benzoyl CoA by the dedicated CoA ligase str10. Benzoyl CoA forms the starter unit for the highly reducing polyketide synthase stpks1 that produces the polyketide prestrobilutin A. The FAD-dependent oxygenase str9 then catalyzes the key oxidative rearrangement responsible for the creation of the beta-methoxyacrylate toxophore. Str9 performs epoxidation of the 2,3 olefin of prestrobilutin A, followed by Meinwald rearrangement to furnish the aldehyde intermediate. Rapid enolization of the aldehyde intermediate would give the beta-methoxyacrylate skeleton and methylations catalyzed by str2 and str3 complete the synthesis and lead to the production of strobilurin A. The short-chain dehydrogenase stl2 and the dehydrogenase str4 play a role in the shunt pathway leading to the production of bolineol. The cluster encodes no obvious halogenase gene that could be involved in production of strobilurin B, nor any obvious dimethylallyl-transferase that could be involved in the production of strobilurin G. It is possible that unknown proteins encoded in, or near, the cluster (such as str1 or stl1) may form new classes of halogenases or dimethylally-transferases, or that the responsible genes are located elsewhere on the genome. Similarly, proteins encoded by str5/str6 hydrolases appear to have no chemical role in the biosynthesis of strobilurin A. Finally, no obvious self-resistance gene is found within the cluster. This chain is Dehydrogenase str4, found in Strobilurus tenacellus.